Consider the following 617-residue polypeptide: uncharacterized protein (617 aa).

Low complexity-rich tracts occupy residues 1–16 (MSKCATPTPSTSSNSS) and 36–45 (STTSSNGSNS). A disordered region spans residues 1-49 (MSKCATPTPSTSSNSSDEAKRSPQPMSRGFPQRNMSTTSSNGSNSPRHR). A run of 3 helical transmembrane segments spans residues 219 to 239 (LMIGAAGGVGGVLIGLTGGLA), 262 to 282 (TAGAAVLGTTMGVAGAGFTGY), and 427 to 447 (PITLIGFSLGARVIFHCLLTM).

The protein belongs to the TMCO4 family.

Its subcellular location is the membrane. This is an uncharacterized protein from Caenorhabditis elegans.